The primary structure comprises 86 residues: Latartoxin-1b (86 aa).

The first 19 residues, 1 to 19, serve as a signal peptide directing secretion; that stretch reads MKILVLAVVCTVLLQVALS. The propeptide at 20–26 is removed in mature form; it reads ADSEEVR. The short motif at 23–26 is the Processing quadruplet motif element; that stretch reads EEVR. Cystine bridges form between C28/C43, C35/C48, C42/C65, and C50/C63.

It belongs to the neurotoxin 19 (CSTX) family. Contains 4 disulfide bonds. In terms of processing, cleavage of the propeptide depends on the processing quadruplet motif (XXXR, with at least one of X being E). Expressed by the venom gland.

It is found in the secreted. Its function is as follows. Insect toxin. The polypeptide is Latartoxin-1b (Lachesana tarabaevi (Spider)).